The sequence spans 395 residues: Elongation factor Tu (395 aa).

Residues K10–Q204 form the tr-type G domain. The G1 stretch occupies residues G19 to T26. G19–T26 is a GTP binding site. Mg(2+) is bound at residue T26. The segment at G60–N64 is G2. Positions D81 to G84 are G3. Residues D81–H85 and N136–D139 contribute to the GTP site. Positions N136–D139 are G4. Positions S174 to L176 are G5.

It belongs to the TRAFAC class translation factor GTPase superfamily. Classic translation factor GTPase family. EF-Tu/EF-1A subfamily. As to quaternary structure, monomer.

Its subcellular location is the cytoplasm. It catalyses the reaction GTP + H2O = GDP + phosphate + H(+). GTP hydrolase that promotes the GTP-dependent binding of aminoacyl-tRNA to the A-site of ribosomes during protein biosynthesis. The chain is Elongation factor Tu from Azobacteroides pseudotrichonymphae genomovar. CFP2.